The sequence spans 338 residues: Anthranilate phosphoribosyltransferase (338 aa).

Residues Gly-81, Gly-84–Asp-85, Ser-89, Asn-91–Thr-94, Lys-109–Ser-117, and Ala-121 each bind 5-phospho-alpha-D-ribose 1-diphosphate. Anthranilate is bound at residue Gly-81. Ser-93 is a binding site for Mg(2+). Asn-112 is an anthranilate binding site. Arg-167 is a binding site for anthranilate. Asp-226 and Glu-227 together coordinate Mg(2+).

The protein belongs to the anthranilate phosphoribosyltransferase family. As to quaternary structure, homodimer. Mg(2+) is required as a cofactor.

The enzyme catalyses N-(5-phospho-beta-D-ribosyl)anthranilate + diphosphate = 5-phospho-alpha-D-ribose 1-diphosphate + anthranilate. It participates in amino-acid biosynthesis; L-tryptophan biosynthesis; L-tryptophan from chorismate: step 2/5. In terms of biological role, catalyzes the transfer of the phosphoribosyl group of 5-phosphorylribose-1-pyrophosphate (PRPP) to anthranilate to yield N-(5'-phosphoribosyl)-anthranilate (PRA). The chain is Anthranilate phosphoribosyltransferase from Rhodopseudomonas palustris (strain ATCC BAA-98 / CGA009).